The primary structure comprises 405 residues: Venom serine protease 34 (405 aa).

A signal peptide spans 1–35 (MIFTNNIAAFQNVVLVKKVKIVLLIFYGSIMFSMT). 2 disulfide bridges follow: Cys-42–Cys-70 and Cys-95–Cys-111. Residues 42–147 (CDYYQNLNLG…EVRPIKRVKD (106 aa)) enclose the CUB domain. N-linked (GlcNAc...) asparagine glycosylation is present at Asn-113. The 237-residue stretch at 161-397 (IVGGTNTGIN…YIDWIVSQTP (237 aa)) folds into the Peptidase S1 domain. Cys-188 and Cys-204 form a disulfide bridge. The active-site Charge relay system is His-203. Residues Asn-209 and Asn-229 are each glycosylated (N-linked (GlcNAc...) asparagine). Residue Asp-257 is the Charge relay system of the active site. Disulfide bonds link Cys-323-Cys-336 and Cys-345-Cys-375. Ser-349 acts as the Charge relay system in catalysis.

This sequence belongs to the peptidase S1 family. Expressed by the venom duct.

Its subcellular location is the secreted. The protein is Venom serine protease 34 of Apis mellifera (Honeybee).